The following is a 359-amino-acid chain: UPF0284 protein MAE_56900 (359 aa).

It belongs to the UPF0284 family.

The chain is UPF0284 protein MAE_56900 from Microcystis aeruginosa (strain NIES-843 / IAM M-2473).